The following is a 353-amino-acid chain: Paraneoplastic antigen Ma1 (353 aa).

The protein belongs to the PNMA family. Testis- and brain-specific. In some cancer patients, specifically expressed by paraneoplastic tumor cells.

It is found in the nucleus. The protein localises to the nucleolus. The protein is Paraneoplastic antigen Ma1 (PNMA1) of Homo sapiens (Human).